The sequence spans 78 residues: Large ribosomal subunit protein uL29 (78 aa).

This sequence belongs to the universal ribosomal protein uL29 family.

This Rippkaea orientalis (strain PCC 8801 / RF-1) (Cyanothece sp. (strain PCC 8801)) protein is Large ribosomal subunit protein uL29.